The following is a 369-amino-acid chain: Uroporphyrinogen decarboxylase (369 aa).

Coproporphyrinogen I contacts are provided by Arg-39, Ala-41, Arg-43, Arg-52, Asp-88, Tyr-166, Ser-221, and His-341. Positions 39, 41, and 43 each coordinate coproporphyrinogen III. Coproporphyrinogen III is bound by residues Asp-88, Tyr-166, Ser-221, and His-341.

Belongs to the uroporphyrinogen decarboxylase family. As to quaternary structure, homodimer.

Its subcellular location is the cytoplasm. The protein resides in the cytosol. It carries out the reaction uroporphyrinogen III + 4 H(+) = coproporphyrinogen III + 4 CO2. The enzyme catalyses uroporphyrinogen I + 4 H(+) = coproporphyrinogen I + 4 CO2. The protein operates within porphyrin-containing compound metabolism; protoporphyrin-IX biosynthesis; coproporphyrinogen-III from 5-aminolevulinate: step 4/4. In terms of biological role, catalyzes the sequential decarboxylation of the four acetate side chains of uroporphyrinogen to form coproporphyrinogen and participates in the fifth step in the heme biosynthetic pathway. Isomer I or isomer III of uroporphyrinogen may serve as substrate, but only coproporphyrinogen III can ultimately be converted to heme. In vitro also decarboxylates pentacarboxylate porphyrinogen I. The sequence is that of Uroporphyrinogen decarboxylase from Danio rerio (Zebrafish).